A 1342-amino-acid polypeptide reads, in one-letter code: Subtilisin-like protease 2 (1342 aa).

A signal peptide spans 1 to 18 (MLNIIYVVSLILIKFIFY). Positions 19–687 (KECNNNNNYY…KLYNNKYSFL (669 aa)) are cleaved as a propeptide — inhibition peptide. Disordered regions lie at residues 85–111 (EKKT…ENEI) and 143–171 (ADVS…NYKN). 5 N-linked (GlcNAc...) asparagine glycosylation sites follow: Asn-165, Asn-343, Asn-451, Asn-455, and Asn-493. A disordered region spans residues 415–474 (KKSKKEKENTQQKGGNNPNVDINILNNNNNNNNNNNNNSNNNSNSMNDEEINYNNNNNKE). The span at 430–474 (NNPNVDINILNNNNNNNNNNNNNSNNNSNSMNDEEINYNNNNNKE) shows a compositional bias: low complexity. A disordered region spans residues 500–531 (IYHNKNDNSYKNKKEGTGKNNDNNDPNNNNNK). Residues 503–516 (NKNDNSYKNKKEGT) are compositionally biased toward basic and acidic residues. The segment covering 518 to 531 (KNNDNNDPNNNNNK) has biased composition (low complexity). 3 N-linked (GlcNAc...) asparagine glycosylation sites follow: Asn-551, Asn-642, and Asn-729. The Extracellular segment spans residues 688 to 1137 (NKFLNIEPLI…LYNLYEYDSH (450 aa)). The region spanning 727–1020 (TWNLSIIRVF…DSLVNAEGAV (294 aa)) is the Peptidase S8 domain. Residues Asp-755 and His-798 each act as charge relay system in the active site. Residues Asn-821, Asn-857, Asn-893, and Asn-951 are each glycosylated (N-linked (GlcNAc...) asparagine). Ser-961 acts as the Charge relay system in catalysis. Asn-1010 and Asn-1106 each carry an N-linked (GlcNAc...) asparagine glycan. The chain crosses the membrane as a helical span at residues 1138–1158 (YLLASVILFFLALLSIFVGMI). The Cytoplasmic portion of the chain corresponds to 1159–1342 (YMKSRKHSDK…MNQLDDMFMK (184 aa)).

Belongs to the peptidase S8 family. In terms of processing, proteolytically cleaved at the N-terminus to generate a 74kDa intermediate which is further processed into a 72kDa form. The first maturation cleavage is autocatalytic, occurs in the ER and is necessary for the subsequent SUB2 trafficking to the microneme. The second cleavage may be mediated by PMX/plasmepsin X.

It localises to the cell membrane. It is found in the cytoplasmic vesicle. The protein localises to the secretory vesicle. Its subcellular location is the microneme membrane. The enzyme catalyses Hydrolysis of proteins with broad specificity for peptide bonds, and a preference for a large uncharged residue in P1. Hydrolyzes peptide amides.. Its activity is regulated as follows. Activation may be calcium-dependent. Inhibited by the non-covalent interaction with the cleaved propeptide. Serine protease which plays an essential role in the shedding of AMA1, MSP1 and MSP7 from the surface of the invading merozoite; this step is essential for productive invasion and the release of the adhesion between the erythrocyte and the merozoite. May cleave TRAMP/PTTRAMP, thereby shedding TRAMP from the merozoite surface during erythrocyte invasion. In Plasmodium falciparum, this protein is Subtilisin-like protease 2.